The chain runs to 577 residues: 5'-nucleotidase (577 aa).

Positions 1 to 30 are cleaved as a signal peptide; that stretch reads MPRVPSASATGSSALLSLLCAFSLGRAAPF. The Zn(2+) site is built by Asp-39, His-41, Asp-86, and Asn-118. An N-linked (GlcNAc...) asparagine glycan is attached at Asn-135. Positions 221 and 244 each coordinate Zn(2+). Asn-246 contributes to the substrate binding site. 2 N-linked (GlcNAc...) asparagine glycosylation sites follow: Asn-311 and Asn-347. Disulfide bonds link Cys-353–Cys-358 and Cys-365–Cys-387. Residue Arg-354 coordinates substrate. 2 residues coordinate substrate: Gln-390 and Arg-395. Residue Asn-403 is glycosylated (N-linked (GlcNAc...) asparagine). Phe-417 contributes to the substrate binding site. Residues Cys-476 and Cys-479 are joined by a disulfide bond. Substrate is bound at residue 500–506; the sequence is YIAEGGD. The GPI-anchor amidated serine moiety is linked to residue Ser-552. A propeptide spans 553 to 577 (removed in mature form); it reads ATLPIINLKIGLSLFAFLTWFLHCS.

This sequence belongs to the 5'-nucleotidase family. In terms of assembly, homodimer. The cofactor is Zn(2+).

The protein resides in the cell membrane. The catalysed reaction is a ribonucleoside 5'-phosphate + H2O = a ribonucleoside + phosphate. Functionally, hydrolyzes extracellular nucleotides into membrane permeable nucleosides. This chain is 5'-nucleotidase, found in Diplobatis ommata (Ocellated electric ray).